We begin with the raw amino-acid sequence, 92 residues long: Putative transcription elongation factor S-II-like protein 81R (92 aa).

The TFIIS-type zinc finger occupies 51–91 (GTVKCPGCGSRRVHALQRQTRSADEPMTLFAMCSECGKRWT). Positions 55, 58, 83, and 86 each coordinate Zn(2+).

The polypeptide is Putative transcription elongation factor S-II-like protein 81R (Dryophytes versicolor (chameleon treefrog)).